Consider the following 358-residue polypeptide: 3-isopropylmalate dehydrogenase (358 aa).

75–88 (GPKWETLPPEKQPE) provides a ligand contact to NAD(+). Positions 96, 106, 135, and 225 each coordinate substrate. Mg(2+)-binding residues include Asp-225, Asp-249, and Asp-253. 283–295 (GSAPDIAGKGVAN) lines the NAD(+) pocket.

The protein belongs to the isocitrate and isopropylmalate dehydrogenases family. LeuB type 1 subfamily. Homodimer. The cofactor is Mg(2+). Mn(2+) is required as a cofactor.

The protein localises to the cytoplasm. The catalysed reaction is (2R,3S)-3-isopropylmalate + NAD(+) = 4-methyl-2-oxopentanoate + CO2 + NADH. The protein operates within amino-acid biosynthesis; L-leucine biosynthesis; L-leucine from 3-methyl-2-oxobutanoate: step 3/4. In terms of biological role, catalyzes the oxidation of 3-carboxy-2-hydroxy-4-methylpentanoate (3-isopropylmalate) to 3-carboxy-4-methyl-2-oxopentanoate. The product decarboxylates to 4-methyl-2 oxopentanoate. The protein is 3-isopropylmalate dehydrogenase of Leptospira interrogans serogroup Icterohaemorrhagiae serovar copenhageni (strain Fiocruz L1-130).